A 319-amino-acid chain; its full sequence is HTH-type transcriptional regulator YidZ (319 aa).

In terms of domain architecture, HTH lysR-type spans 8-65 (LDLNLLLCLQLLMQERSVTKAAKRMNVTPSAVSKSLAKLRAWFDDPLFVNTPLGLAPT). Residues 25–44 (VTKAAKRMNVTPSAVSKSLA) constitute a DNA-binding region (H-T-H motif).

This sequence belongs to the LysR transcriptional regulatory family.

Involved in anaerobic NO protection. The chain is HTH-type transcriptional regulator YidZ from Salmonella heidelberg (strain SL476).